Here is a 548-residue protein sequence, read N- to C-terminus: Esterase-5A (548 aa).

The first 19 residues, 1–19, serve as a signal peptide directing secretion; that stretch reads MHLVRWLICLIQLWIQLGA. Cysteines 87 and 106 form a disulfide. N-linked (GlcNAc...) asparagine glycans are attached at residues N95 and N116. Residue S210 is the Acyl-ester intermediate of the active site. C262 and C274 are disulfide-bonded. An N-linked (GlcNAc...) asparagine glycan is attached at N479. A disulfide bond links C518 and C539.

The protein belongs to the type-B carboxylesterase/lipase family.

The protein resides in the secreted. It carries out the reaction a carboxylic ester + H2O = an alcohol + a carboxylate + H(+). The polypeptide is Esterase-5A (Est-5A) (Drosophila persimilis (Fruit fly)).